Consider the following 293-residue polypeptide: Notch homolog 2 N-terminal-like protein C (293 aa).

4 EGF-like domains span residues 42–81, 82–120, 123–161, and 162–198; these read PPRMCRDGYEPCVNEGMCVTYHNGTGYCKCPEGFLGEYCQ, HRDPCEKNRCQNGGTCVAQAMLGKATCRCASGFTGEDCQ, TSHPCFVSRPCLNGGTCHMLSRDTYECTCQVGFTGKECQ, and WTDACLSHPCANGSTCTTVANQFSCKCLTGFTGQKCE. 17 disulfide bridges follow: C46/C59, C53/C69, C71/C80, C86/C97, C91/C108, C110/C119, C127/C139, C133/C149, C151/C160, C166/C177, C171/C186, C188/C197, C204/C216, C210/C225, C227/C236, C243/C254, and C248/C264. N64 is a glycosylation site (N-linked (GlcNAc...) asparagine). N-linked (GlcNAc...) asparagine glycosylation is present at N173. The EGF-like 5; calcium-binding domain maps to 200 to 237; it reads DVNECDIPGHCQHGGTCLNLPGSYQCQCLQGFTGQYCD. The EGF-like 6 domain occupies 239–276; that stretch reads LYVPCAPSPCVNGGTCRQTGDFTFECNCLPETVRRGTE.

Belongs to the NOTCH family. As to quaternary structure, interacts with NOTCH2. Interacts with DLL1; the interaction is direct. Expressed in radial glia neural stem cells during cortical development.

It is found in the secreted. Functionally, human-specific protein that promotes neural progenitor proliferation and evolutionary expansion of the brain neocortex by regulating the Notch signaling pathway. Able to promote neural progenitor self-renewal, possibly by down-regulating neuronal differentiation genes, thereby delaying the differentiation of neuronal progenitors and leading to an overall final increase in neuronal production. Acts by enhancing the Notch signaling pathway via two different mechanisms that probably work in parallel to reach the same effect. Enhances Notch signaling pathway in a non-cell-autonomous manner via direct interaction with NOTCH2. Also promotes Notch signaling pathway in a cell-autonomous manner through inhibition of cis DLL1-NOTCH2 interactions, which promotes neuronal differentiation. The polypeptide is Notch homolog 2 N-terminal-like protein C (Homo sapiens (Human)).